A 546-amino-acid chain; its full sequence is Probable protein kinase UbiB (546 aa).

Positions aspartate 124 to phenylalanine 502 constitute a Protein kinase domain. ATP contacts are provided by residues leucine 130–valine 138 and lysine 153. The active-site Proton acceptor is the aspartate 288. 2 consecutive transmembrane segments (helical) span residues tyrosine 501–proline 521 and glutamate 522–tryptophan 542.

The protein belongs to the ABC1 family. UbiB subfamily.

It localises to the cell inner membrane. It participates in cofactor biosynthesis; ubiquinone biosynthesis [regulation]. In terms of biological role, is probably a protein kinase regulator of UbiI activity which is involved in aerobic coenzyme Q (ubiquinone) biosynthesis. The protein is Probable protein kinase UbiB of Shigella sonnei (strain Ss046).